The sequence spans 374 residues: Phosphate acyltransferase (374 aa).

This sequence belongs to the PlsX family. In terms of assembly, homodimer. Probably interacts with PlsY.

Its subcellular location is the cytoplasm. The enzyme catalyses a fatty acyl-[ACP] + phosphate = an acyl phosphate + holo-[ACP]. It functions in the pathway lipid metabolism; phospholipid metabolism. Functionally, catalyzes the reversible formation of acyl-phosphate (acyl-PO(4)) from acyl-[acyl-carrier-protein] (acyl-ACP). This enzyme utilizes acyl-ACP as fatty acyl donor, but not acyl-CoA. This Gluconacetobacter diazotrophicus (strain ATCC 49037 / DSM 5601 / CCUG 37298 / CIP 103539 / LMG 7603 / PAl5) protein is Phosphate acyltransferase.